The following is an 85-amino-acid chain: NADH-ubiquinone oxidoreductase chain 4L (85 aa).

2 helical membrane-spanning segments follow: residues 21–41 (LLVT…LLVY) and 51–71 (FIFL…LVSL).

This sequence belongs to the complex I subunit 4L family.

The protein resides in the mitochondrion membrane. The enzyme catalyses a ubiquinone + NADH + 5 H(+)(in) = a ubiquinol + NAD(+) + 4 H(+)(out). In terms of biological role, core subunit of the mitochondrial membrane respiratory chain NADH dehydrogenase (Complex I) that is believed to belong to the minimal assembly required for catalysis. Complex I functions in the transfer of electrons from NADH to the respiratory chain. The immediate electron acceptor for the enzyme is believed to be ubiquinone. The sequence is that of NADH-ubiquinone oxidoreductase chain 4L (ND4L) from Artemia franciscana (Brine shrimp).